The chain runs to 1178 residues: Pesticidal crystal protein Cry1Ac (1178 aa).

This sequence belongs to the delta endotoxin family.

Functionally, promotes colloidosmotic lysis by binding to the midgut epithelial cells of many lepidopteran larvae. The polypeptide is Pesticidal crystal protein Cry1Ac (cry1Ac) (Bacillus thuringiensis subsp. kurstaki).